A 284-amino-acid polypeptide reads, in one-letter code: Riboflavin transporter (284 aa).

EamA domains are found at residues 2–129 (VAAC…LIII) and 141–273 (LLPI…SLYL). The next 8 helical transmembrane spans lie at 26-46 (SVII…PLLV), 58-78 (FGLH…WIYA), 82-102 (VPIW…ILCA), 115-135 (LLTT…WSDS), 136-156 (YTVY…YSVM), 167-187 (ASIS…LWLA), 195-215 (ITAP…FTAL), and 247-267 (GWIV…ALII).

The protein belongs to the drug/metabolite transporter (DMT) superfamily. 10 TMS drug/metabolite exporter (DME) (TC 2.A.7.3) family.

The protein localises to the cell membrane. In terms of biological role, transports riboflavin into the cell. The chain is Riboflavin transporter from Brucella anthropi (strain ATCC 49188 / DSM 6882 / CCUG 24695 / JCM 21032 / LMG 3331 / NBRC 15819 / NCTC 12168 / Alc 37) (Ochrobactrum anthropi).